The chain runs to 179 residues: ATP synthase subunit delta (179 aa).

This sequence belongs to the ATPase delta chain family. In terms of assembly, F-type ATPases have 2 components, F(1) - the catalytic core - and F(0) - the membrane proton channel. F(1) has five subunits: alpha(3), beta(3), gamma(1), delta(1), epsilon(1). F(0) has three main subunits: a(1), b(2) and c(10-14). The alpha and beta chains form an alternating ring which encloses part of the gamma chain. F(1) is attached to F(0) by a central stalk formed by the gamma and epsilon chains, while a peripheral stalk is formed by the delta and b chains.

The protein localises to the cell inner membrane. Functionally, f(1)F(0) ATP synthase produces ATP from ADP in the presence of a proton or sodium gradient. F-type ATPases consist of two structural domains, F(1) containing the extramembraneous catalytic core and F(0) containing the membrane proton channel, linked together by a central stalk and a peripheral stalk. During catalysis, ATP synthesis in the catalytic domain of F(1) is coupled via a rotary mechanism of the central stalk subunits to proton translocation. Its function is as follows. This protein is part of the stalk that links CF(0) to CF(1). It either transmits conformational changes from CF(0) to CF(1) or is implicated in proton conduction. The chain is ATP synthase subunit delta from Polaromonas naphthalenivorans (strain CJ2).